Reading from the N-terminus, the 175-residue chain is uncharacterized protein (175 aa).

The signal sequence occupies residues 1–33; sequence MERLPYEIVSTIFRKAILHYVLIRGTTYPQSLA.

This is an uncharacterized protein from Methanocaldococcus jannaschii (strain ATCC 43067 / DSM 2661 / JAL-1 / JCM 10045 / NBRC 100440) (Methanococcus jannaschii).